The sequence spans 251 residues: Triosephosphate isomerase (251 aa).

A substrate-binding site is contributed by asparagine 9–lysine 11. The Electrophile role is filled by histidine 96. Glutamate 167 functions as the Proton acceptor in the catalytic mechanism. Substrate contacts are provided by residues glycine 173, serine 213, and glycine 234–glycine 235.

The protein belongs to the triosephosphate isomerase family. As to quaternary structure, homodimer.

It is found in the cytoplasm. It catalyses the reaction D-glyceraldehyde 3-phosphate = dihydroxyacetone phosphate. Its pathway is carbohydrate biosynthesis; gluconeogenesis. The protein operates within carbohydrate degradation; glycolysis; D-glyceraldehyde 3-phosphate from glycerone phosphate: step 1/1. In terms of biological role, involved in the gluconeogenesis. Catalyzes stereospecifically the conversion of dihydroxyacetone phosphate (DHAP) to D-glyceraldehyde-3-phosphate (G3P). This is Triosephosphate isomerase from Phocaeicola vulgatus (strain ATCC 8482 / DSM 1447 / JCM 5826 / CCUG 4940 / NBRC 14291 / NCTC 11154) (Bacteroides vulgatus).